Consider the following 164-residue polypeptide: Ion-translocating oxidoreductase complex subunit G (164 aa).

Position 125 is an FMN phosphoryl threonine (Thr-125).

Belongs to the RnfG family. The complex is composed of six subunits: RnfA, RnfB, RnfC, RnfD, RnfE and RnfG. The cofactor is FMN.

Functionally, part of a membrane-bound complex that couples electron transfer with translocation of ions across the membrane. This Buchnera aphidicola subsp. Acyrthosiphon pisum (strain APS) (Acyrthosiphon pisum symbiotic bacterium) protein is Ion-translocating oxidoreductase complex subunit G.